Here is a 950-residue protein sequence, read N- to C-terminus: 5'-3' exoribonuclease 2 (950 aa).

A CCHC-type zinc finger spans residues 262–278 (PCGLCNQFGHEVKDCEG). An N6-acetyllysine modification is found at Lys-286. Residues 408 to 508 (KDDEDSFRRR…SDSEPEPEDN (101 aa)) form a disordered region. Basic residues predominate over residues 416 to 426 (RRQKEKRKRMK). Thr-439 carries the post-translational modification Phosphothreonine. Positions 445–458 (SRNSPGSQVASNPR) are enriched in polar residues. 9 positions are modified to phosphoserine: Ser-448, Ser-471, Ser-473, Ser-475, Ser-482, Ser-487, Ser-499, Ser-501, and Ser-678. The span at 468–482 (NNSSPSISPNTSFTS) shows a compositional bias: low complexity. 3 positions are modified to asymmetric dimethylarginine; alternate: Arg-824, Arg-847, and Arg-851. Arg-824, Arg-847, and Arg-851 each carry omega-N-methylarginine; alternate. Asymmetric dimethylarginine is present on Arg-880. The residue at position 883 (Arg-883) is an Asymmetric dimethylarginine; alternate. Arg-883 bears the Omega-N-methylarginine; alternate mark. An Omega-N-methylarginine modification is found at Arg-895. The disordered stretch occupies residues 911-950 (MLAGPGGYPPRRDDRGGRQGYPREGRKYPLPPPSGRYNWN). Over residues 920-937 (PRRDDRGGRQGYPREGRK) the composition is skewed to basic and acidic residues. An Asymmetric dimethylarginine; alternate modification is found at Arg-946. Arg-946 carries the omega-N-methylarginine; alternate modification.

The protein belongs to the 5'-3' exonuclease family. XRN2/RAT1 subfamily. Interacts with POLR2A and SMN1/SMN2. Interacts with CDKN2AIP and NKRF. Interacts with CDKN2AIPNL; the interaction is direct. Interacts with TRIM71 (via NHL repeats) in an RNA-dependent manner. Interacts with DHX34; the interaction is RNA-independent. As to expression, expressed in the spleen, thymus, prostate, testis, ovary, small intestine, colon, peripheral blood leukocytes, heart, brain, placenta, lung, liver, skeletal muscle, kidney, and pancreas. Isoform 2 is expressed predominantly in peripheral blood leukocytes.

The protein localises to the nucleus. It localises to the nucleolus. Functionally, possesses 5'-&gt;3' exoribonuclease activity. May promote the termination of transcription by RNA polymerase II. During transcription termination, cleavage at the polyadenylation site liberates a 5' fragment which is subsequently processed to form the mature mRNA and a 3' fragment which remains attached to the elongating polymerase. The processive degradation of this 3' fragment by this protein may promote termination of transcription. Binds to RNA polymerase II (RNAp II) transcription termination R-loops formed by G-rich pause sites. The polypeptide is 5'-3' exoribonuclease 2 (XRN2) (Homo sapiens (Human)).